The following is a 226-amino-acid chain: MIVHIPAVLNAEQIARCRAVMQTGDWIDGRVTAGHQSRLVKNNLQLPESSPEHQELGEMIVRALWHNPLFISAVLPHTIFPPLFNRYDVGMGFGTHVDTAVRRNLDGSLRIRTDVSATLFLAGPEDYDGGELTIEDTYGTHSVRLPAGDLIIYPADSLHFVSPVTRGSRIASFFWIQSLIRDKTQRNLLFNLDTAIMRLTEDVAGNPALVSLQGVYHNLLRQWAEI.

Residues 78–178 enclose the Fe2OG dioxygenase domain; it reads TIFPPLFNRY…RIASFFWIQS (101 aa). Positions 96, 98, and 159 each coordinate Fe cation. R169 is a 2-oxoglutarate binding site.

It depends on Fe(2+) as a cofactor. L-ascorbate serves as cofactor.

This chain is PKHD-type hydroxylase Bind_0236, found in Beijerinckia indica subsp. indica (strain ATCC 9039 / DSM 1715 / NCIMB 8712).